Consider the following 355-residue polypeptide: DNA polymerase IV (355 aa).

The 182-residue stretch at 7–188 folds into the UmuC domain; the sequence is IIHIDMDCFY…LPLSKIPGVG (182 aa). 2 residues coordinate Mg(2+): Asp-11 and Asp-106. Glu-107 is an active-site residue.

This sequence belongs to the DNA polymerase type-Y family. In terms of assembly, monomer. Mg(2+) serves as cofactor.

It is found in the cytoplasm. The catalysed reaction is DNA(n) + a 2'-deoxyribonucleoside 5'-triphosphate = DNA(n+1) + diphosphate. Poorly processive, error-prone DNA polymerase involved in untargeted mutagenesis. Copies undamaged DNA at stalled replication forks, which arise in vivo from mismatched or misaligned primer ends. These misaligned primers can be extended by PolIV. Exhibits no 3'-5' exonuclease (proofreading) activity. May be involved in translesional synthesis, in conjunction with the beta clamp from PolIII. This is DNA polymerase IV from Mannheimia succiniciproducens (strain KCTC 0769BP / MBEL55E).